Reading from the N-terminus, the 647-residue chain is MFQDNPLLAQLKQQLHSQTPRVEGVVKGTDKGFGFLEVDAQKSYFIPPPQMKKVMHGDRVRAAVQVDKEREIAEPEELLEPFLTRFVGRIQKKENDERLSIIPDHSLLKDAIGCRPARGLDRAFRQGDWVLAEMRRHPLKGDRSFFAEITAFITDGSDHFAPWWVTLTRHDLARSAPQWQAGTLLEEGLAREDLCALPFVTIDSASTEDMDDALHVRENADGSLCLTIAIADPTAYVSADSPLDAEARHRAFTTYLPGFNIPMLPRDLSDDLCSLREGQRRPVLACEVTLDADGSLRDDIRFFSGWIESKAKLVYDRVSDWLEGRGDWQPPSDDIAAQIRLLHRVANARTQWRQQHALVFRDRPDYRFVLDDHGDVTDIVAEPRRVANRIVEECMITANVCAALVLRERLGFGIYNVHTGFDPALVEQAVSLLNANDVAANAEALLTLDGFCTLRRHLDSLPSTFLDSRIRRFQTFAEISTEPGPHFGLGLEAYATWTSPIRKYGDMVNHRLLKALIAGAPATRPDPAMTLQLAERRRQNRMAERDVGDWLYARFLKDKVNAPTPFNAEIIDISRGGMRVRLLENGAVAFIPASFIHAVRDEMVCSQENGTLQVKGSVVYRQGDTVPVTLSEVRLDTRSLIARPFSA.

The 327-residue stretch at 191–517 (REDLCALPFV…VNHRLLKALI (327 aa)) folds into the RNB domain. In terms of domain architecture, S1 motif spans 563 to 645 (PTPFNAEIID…DTRSLIARPF (83 aa)).

The protein belongs to the RNR ribonuclease family. RNase II subfamily.

It localises to the cytoplasm. It carries out the reaction Exonucleolytic cleavage in the 3'- to 5'-direction to yield nucleoside 5'-phosphates.. In terms of biological role, involved in mRNA degradation. Hydrolyzes single-stranded polyribonucleotides processively in the 3' to 5' direction. This Edwardsiella piscicida protein is Exoribonuclease 2.